A 1060-amino-acid polypeptide reads, in one-letter code: MILVIAEKPNVARKIAMALAEVKPIKKTLFGVPYYELIRDGKRLIVASAVGHLYGLAPKNDFFGYPIFDVEWVPVYIAEKGKEYAKDYIKLLSVLSKRVREFIVACDYDTEGEVIGYTALKYACGVDPGVAKRMKFSALTKRDLIKAWYNLEPTINFGMANAGIARHILDWYWGVNLSRALTHAIKRASGKWVVLSTGRVQGPTLKFLVDREREIQSFVPQPYWVIKLIFEKNGKKYTANYEKDKIWDENEAKRIVLEVKKAPARVTNIEVKQQNRNPPVPFDLGTLQREAYSAFGFSPKKTLDIAQSLYEKGFCLHPDTLILTSQGVRKIKELSREGEVFALDFNLKLSKAKYRLLERDADEQMYKVTLLDGTELYLTADHPVLVYREGNLAFVPADKLRETDHVVLVLNKSARDNYGFLDLLLEITDSQEDYAILENGETLSLHSLKMLVERGEIKDIAVVGFSHNNFGKVMLRDELWYLIGYLAGKGGEIKGNGVVISSRTKEIVGLTKSLNIDLIETEEGIVLSNKSFVRLLHLIHYTPRVPEVYGIINNTEWLKAFLAGYYDATLLEGLTLEALYKIKVYLQLLGIRAKIEDNKLKVHLEDLQRFRELLGKFSRRKLYVETSQVPVFTDFDERSYDFPRILGGDIYIIGIKSIEKFHYKGKVYDLVVENYHNFIANGIAVHNCSYPRTESQKLPKNLNYKFIIQNLARIPEYRPYAHLLLGMPELKPVEGKKEDPAHPAIYPTGEIPRPGDLTKDEALLYDMIVRRFLAVFMEPAVRETVKVTISAGKHKFFISGGRTVKEGWLRVYGKYVKFDEVTLPTFFIGERIKVLQVKREKKKTKPPARYSPAAVIKKMEDLGLGTKATRAQILETLYQRGYIEGKKSIKVTPLGMKVIETLEKYVPEIISVELTREFEKKMELIMEGKLTKEEVIEEAKIRLTKILEEFKKKELEIGLELAKIVVGEEKPPLIVGKCPKCGGDLIVKYNEKTGKRFVGCSNWPKCNVTYPILQRGEIIPTNKTCCNGAPVVIIREKDGREWEICLDMNCKEYNTIKKKR.

The Toprim domain maps to 1–141 (MILVIAEKPN…KRMKFSALTK (141 aa)). The Mg(2+) site is built by glutamate 7 and aspartate 107. One can recognise a Topo IA-type catalytic domain in the interval 156 to 947 (NFGMANAGIA…EAKIRLTKIL (792 aa)). The interaction with DNA stretch occupies residues 196 to 201 (STGRVQ). One can recognise a DOD-type homing endonuclease domain in the interval 482-591 (LIGYLAGKGG…IKVYLQLLGI (110 aa)). Tyrosine 690 functions as the O-(5'-phospho-DNA)-tyrosine intermediate in the catalytic mechanism. A C4-type 1 zinc finger spans residues 978–1006 (CPKCGGDLIVKYNEKTGKRFVGCSNWPKC). The C4-type 2; atypical zinc finger occupies 1025–1050 (CCNGAPVVIIREKDGREWEICLDMNC).

This sequence belongs to the type IA topoisomerase family. As to quaternary structure, monomer. Mg(2+) is required as a cofactor. In terms of processing, this protein undergoes a protein self splicing that involves a post-translational excision of the intervening region (intein) followed by peptide ligation.

The enzyme catalyses ATP-independent breakage of single-stranded DNA, followed by passage and rejoining.. Functionally, releases the supercoiling and torsional tension of DNA, which is introduced during the DNA replication and transcription, by transiently cleaving and rejoining one strand of the DNA duplex. Introduces a single-strand break via transesterification at a target site in duplex DNA. The scissile phosphodiester is attacked by the catalytic tyrosine of the enzyme, resulting in the formation of a DNA-(5'-phosphotyrosyl)-enzyme intermediate and the expulsion of a 3'-OH DNA strand. The free DNA strand then undergoes passage around the unbroken strand, thus removing DNA supercoils. Finally, in the religation step, the DNA 3'-OH attacks the covalent intermediate to expel the active-site tyrosine and restore the DNA phosphodiester backbone. The chain is DNA topoisomerase 1 (topA) from Pyrococcus furiosus (strain ATCC 43587 / DSM 3638 / JCM 8422 / Vc1).